Reading from the N-terminus, the 268-residue chain is Embryonic abundant protein USP87 (268 aa).

A signal peptide spans 1–22; sequence MEFAHLTVLSLFCLAFVGITAT. 5 repeat units span residues 50–55, 83–88, 101–106, 166–183, and 202–222. The interval 50–106 is 3 X 6 AA approximate repeats; the sequence is GKTNSLPIKSEELKQYSTLFFEHDLHPRKNFILGNTNSVGSIIRPFTKSRQGVTDSI. The BURP domain maps to 68–259; that stretch reads LFFEHDLHPR…GNKAAAWVPN (192 aa). The 2 X approximate repeats stretch occupies residues 166–222; it reads YVVEDVKKVGDNAVMCHRLNFEKVVFNCHQVRDTTAYVVSLVASDGTKTKALTVCHH. Asparagine 259 is a glycosylation site (N-linked (GlcNAc...) asparagine).

In terms of tissue distribution, seed.

This is Embryonic abundant protein USP87 from Vicia faba (Broad bean).